The chain runs to 195 residues: Erythropoietin (195 aa).

Residues 1–28 (MGVRGRLALLPLALLCLLVLALGLPVLG) form the signal peptide. Cystine bridges form between Cys-35-Cys-190 and Cys-57-Cys-61. A glycan (N-linked (GlcNAc...) asparagine) is linked at Asn-52. Asn-66 and Asn-111 each carry an N-linked (GlcNAc...) asparagine glycan.

This sequence belongs to the EPO/TPO family.

It is found in the secreted. Hormone involved in the regulation of erythrocyte proliferation and differentiation and the maintenance of a physiological level of circulating erythrocyte mass. Binds to EPOR leading to EPOR dimerization and JAK2 activation thereby activating specific downstream effectors, including STAT1 and STAT3. The polypeptide is Erythropoietin (EPO) (Oryctolagus cuniculus (Rabbit)).